The sequence spans 181 residues: Endoribonuclease YbeY (181 aa).

3 residues coordinate Zn(2+): His140, His144, and His150.

It belongs to the endoribonuclease YbeY family. Zn(2+) is required as a cofactor.

The protein localises to the cytoplasm. Its function is as follows. Single strand-specific metallo-endoribonuclease involved in late-stage 70S ribosome quality control and in maturation of the 3' terminus of the 16S rRNA. The sequence is that of Endoribonuclease YbeY from Dinoroseobacter shibae (strain DSM 16493 / NCIMB 14021 / DFL 12).